The sequence spans 171 residues: Shikimate kinase (171 aa).

ATP is bound at residue 14-19 (GAGKST). A Mg(2+)-binding site is contributed by serine 18. Substrate-binding residues include aspartate 36, arginine 60, and glycine 82. Arginine 120 contributes to the ATP binding site. Arginine 139 is a binding site for substrate. Residue glutamine 156 coordinates ATP.

Belongs to the shikimate kinase family. In terms of assembly, monomer. It depends on Mg(2+) as a cofactor.

Its subcellular location is the cytoplasm. It catalyses the reaction shikimate + ATP = 3-phosphoshikimate + ADP + H(+). It functions in the pathway metabolic intermediate biosynthesis; chorismate biosynthesis; chorismate from D-erythrose 4-phosphate and phosphoenolpyruvate: step 5/7. Catalyzes the specific phosphorylation of the 3-hydroxyl group of shikimic acid using ATP as a cosubstrate. The polypeptide is Shikimate kinase (Shewanella sp. (strain ANA-3)).